The following is a 379-amino-acid chain: Putative glutamate--cysteine ligase 2 (379 aa).

Belongs to the glutamate--cysteine ligase type 2 family. YbdK subfamily.

The catalysed reaction is L-cysteine + L-glutamate + ATP = gamma-L-glutamyl-L-cysteine + ADP + phosphate + H(+). Functionally, ATP-dependent carboxylate-amine ligase which exhibits weak glutamate--cysteine ligase activity. The chain is Putative glutamate--cysteine ligase 2 from Roseiflexus castenholzii (strain DSM 13941 / HLO8).